A 304-amino-acid polypeptide reads, in one-letter code: UDP-3-O-acyl-N-acetylglucosamine deacetylase (304 aa).

3 residues coordinate Zn(2+): H78, H237, and D241. Residue H264 is the Proton donor of the active site.

It belongs to the LpxC family. Zn(2+) is required as a cofactor.

It catalyses the reaction a UDP-3-O-[(3R)-3-hydroxyacyl]-N-acetyl-alpha-D-glucosamine + H2O = a UDP-3-O-[(3R)-3-hydroxyacyl]-alpha-D-glucosamine + acetate. It participates in glycolipid biosynthesis; lipid IV(A) biosynthesis; lipid IV(A) from (3R)-3-hydroxytetradecanoyl-[acyl-carrier-protein] and UDP-N-acetyl-alpha-D-glucosamine: step 2/6. Functionally, catalyzes the hydrolysis of UDP-3-O-myristoyl-N-acetylglucosamine to form UDP-3-O-myristoylglucosamine and acetate, the committed step in lipid A biosynthesis. This Nitrosococcus oceani (strain ATCC 19707 / BCRC 17464 / JCM 30415 / NCIMB 11848 / C-107) protein is UDP-3-O-acyl-N-acetylglucosamine deacetylase.